Consider the following 204-residue polypeptide: Glycerol-3-phosphate acyltransferase (204 aa).

5 consecutive transmembrane segments (helical) span residues 8–28 (ILIF…CYIF), 53–73 (VPAA…VVIA), 81–101 (FITA…IFFG), 116–136 (FGFS…VAII), and 155–175 (VIFT…IIIL).

It belongs to the PlsY family. As to quaternary structure, probably interacts with PlsX.

It is found in the cell inner membrane. It carries out the reaction an acyl phosphate + sn-glycerol 3-phosphate = a 1-acyl-sn-glycero-3-phosphate + phosphate. It functions in the pathway lipid metabolism; phospholipid metabolism. Catalyzes the transfer of an acyl group from acyl-phosphate (acyl-PO(4)) to glycerol-3-phosphate (G3P) to form lysophosphatidic acid (LPA). This enzyme utilizes acyl-phosphate as fatty acyl donor, but not acyl-CoA or acyl-ACP. The chain is Glycerol-3-phosphate acyltransferase from Francisella tularensis subsp. holarctica (strain FTNF002-00 / FTA).